We begin with the raw amino-acid sequence, 631 residues long: Nucleoside triphosphatase I (631 aa).

Residues 42-204 enclose the Helicase ATP-binding domain; the sequence is FLGLDSMHSL…TMLVNLLRPG (163 aa). Residue 55-62 coordinates ATP; the sequence is HETGVGKT. A DEXH box motif is present at residues 141–144; the sequence is DECH. The 166-residue stretch at 367 to 532 folds into the Helicase C-terminal domain; it reads KFIDVCLGIL…EFVQLFRVFK (166 aa).

This sequence belongs to the helicase family. NPH I subfamily. As to quaternary structure, monomer.

The enzyme catalyses a ribonucleoside 5'-triphosphate + H2O = a ribonucleoside 5'-diphosphate + phosphate + H(+). Serves two roles in transcription; it acts in concert with viral termination factor/capping enzyme to catalyze release of UUUUUNU-containing nascent RNA from the elongation complex, and it acts by itself as a polymerase elongation factor to facilitate readthrough of intrinsic pause sites. The polypeptide is Nucleoside triphosphatase I (NPH1) (Homo sapiens (Human)).